The following is a 249-amino-acid chain: Probable transcriptional regulatory protein CYA_2259 (249 aa).

It belongs to the TACO1 family.

The protein resides in the cytoplasm. This is Probable transcriptional regulatory protein CYA_2259 from Synechococcus sp. (strain JA-3-3Ab) (Cyanobacteria bacterium Yellowstone A-Prime).